We begin with the raw amino-acid sequence, 432 residues long: Adenylosuccinate synthetase (432 aa).

GTP-binding positions include 11 to 17 (GDEGKGK) and 39 to 41 (GHT). D12 acts as the Proton acceptor in catalysis. Positions 12 and 39 each coordinate Mg(2+). IMP contacts are provided by residues 12-15 (DEGK), 37-40 (NAGH), T134, R148, N230, T245, and R309. Catalysis depends on H40, which acts as the Proton donor. 305–311 (VTTGRKR) lines the substrate pocket. Residues R311, 337 to 339 (KLD), and 419 to 421 (GTG) each bind GTP.

Belongs to the adenylosuccinate synthetase family. As to quaternary structure, homodimer. Mg(2+) serves as cofactor.

Its subcellular location is the cytoplasm. It catalyses the reaction IMP + L-aspartate + GTP = N(6)-(1,2-dicarboxyethyl)-AMP + GDP + phosphate + 2 H(+). Its pathway is purine metabolism; AMP biosynthesis via de novo pathway; AMP from IMP: step 1/2. Plays an important role in the de novo pathway and in the salvage pathway of purine nucleotide biosynthesis. Catalyzes the first committed step in the biosynthesis of AMP from IMP. The polypeptide is Adenylosuccinate synthetase (Vanderwaltozyma polyspora (strain ATCC 22028 / DSM 70294 / BCRC 21397 / CBS 2163 / NBRC 10782 / NRRL Y-8283 / UCD 57-17) (Kluyveromyces polysporus)).